We begin with the raw amino-acid sequence, 377 residues long: uncharacterized protein (377 aa).

2 stretches are compositionally biased toward polar residues: residues 1-11 (MSSIQGTSGSS) and 31-43 (PSGQTISFSAVGK). Disordered stretches follow at residues 1 to 43 (MSSI…AVGK), 109 to 141 (SSEEQLESPGVRNKSALKGTNRSNSHREEIARN), and 328 to 377 (SSSP…RGFQ). Residues 334–345 (EDPRSLRDRLRD) are compositionally biased toward basic and acidic residues.

It belongs to the chlamydial CPn_0499/CT_392/TC_0671 family.

This is an uncharacterized protein from Chlamydia trachomatis serovar D (strain ATCC VR-885 / DSM 19411 / UW-3/Cx).